A 529-amino-acid chain; its full sequence is Probable bifunctional tRNA threonylcarbamoyladenosine biosynthesis protein (529 aa).

The segment at 1–324 (MIVLGLEGTA…FRIDEVDAPW (324 aa)) is kae1. Fe cation-binding residues include His-107, His-111, and Tyr-128. L-threonylcarbamoyladenylate-binding positions include 128–132 (YVSGG), Asp-160, Gly-173, Glu-177, and Asn-257. Residue Asp-285 participates in Fe cation binding. Positions 329–529 (SRKDYGKAGA…SAIRRRHRYV (201 aa)) constitute a Protein kinase domain. ATP contacts are provided by residues 335–342 (KAGAESRI) and Lys-355. The Proton acceptor; for kinase activity role is filled by Asp-447.

It in the N-terminal section; belongs to the KAE1 / TsaD family. This sequence in the C-terminal section; belongs to the protein kinase superfamily. Tyr protein kinase family. BUD32 subfamily. Component of the KEOPS complex that consists of Kae1, Bud32, Cgi121 and Pcc1; the whole complex dimerizes. The cofactor is Fe(2+).

The protein resides in the cytoplasm. It catalyses the reaction L-seryl-[protein] + ATP = O-phospho-L-seryl-[protein] + ADP + H(+). It carries out the reaction L-threonyl-[protein] + ATP = O-phospho-L-threonyl-[protein] + ADP + H(+). The catalysed reaction is L-threonylcarbamoyladenylate + adenosine(37) in tRNA = N(6)-L-threonylcarbamoyladenosine(37) in tRNA + AMP + H(+). In terms of biological role, required for the formation of a threonylcarbamoyl group on adenosine at position 37 (t(6)A37) in tRNAs that read codons beginning with adenine. Is a component of the KEOPS complex that is probably involved in the transfer of the threonylcarbamoyl moiety of threonylcarbamoyl-AMP (TC-AMP) to the N6 group of A37. The Kae1 domain likely plays a direct catalytic role in this reaction. The Bud32 domain probably displays kinase activity that regulates Kae1 function. The chain is Probable bifunctional tRNA threonylcarbamoyladenosine biosynthesis protein from Thermoplasma acidophilum (strain ATCC 25905 / DSM 1728 / JCM 9062 / NBRC 15155 / AMRC-C165).